The sequence spans 63 residues: Large ribosomal subunit protein uL29 (63 aa).

Belongs to the universal ribosomal protein uL29 family.

The chain is Large ribosomal subunit protein uL29 from Pelagibacter ubique (strain HTCC1062).